The sequence spans 145 residues: D-aminoacyl-tRNA deacylase (145 aa).

Positions 137-138 match the Gly-cisPro motif, important for rejection of L-amino acids motif; the sequence is GP.

The protein belongs to the DTD family. As to quaternary structure, homodimer.

The protein resides in the cytoplasm. The enzyme catalyses glycyl-tRNA(Ala) + H2O = tRNA(Ala) + glycine + H(+). The catalysed reaction is a D-aminoacyl-tRNA + H2O = a tRNA + a D-alpha-amino acid + H(+). An aminoacyl-tRNA editing enzyme that deacylates mischarged D-aminoacyl-tRNAs. Also deacylates mischarged glycyl-tRNA(Ala), protecting cells against glycine mischarging by AlaRS. Acts via tRNA-based rather than protein-based catalysis; rejects L-amino acids rather than detecting D-amino acids in the active site. By recycling D-aminoacyl-tRNA to D-amino acids and free tRNA molecules, this enzyme counteracts the toxicity associated with the formation of D-aminoacyl-tRNA entities in vivo and helps enforce protein L-homochirality. The polypeptide is D-aminoacyl-tRNA deacylase (Ruegeria pomeroyi (strain ATCC 700808 / DSM 15171 / DSS-3) (Silicibacter pomeroyi)).